Here is a 107-residue protein sequence, read N- to C-terminus: Integration host factor subunit beta (107 aa).

The tract at residues 87–107 is disordered; the sequence is RERVNNGTRKNGGSADAASGG.

It belongs to the bacterial histone-like protein family. Heterodimer of an alpha and a beta chain.

Functionally, this protein is one of the two subunits of integration host factor, a specific DNA-binding protein that functions in genetic recombination as well as in transcriptional and translational control. The protein is Integration host factor subunit beta of Granulibacter bethesdensis (strain ATCC BAA-1260 / CGDNIH1).